Here is a 216-residue protein sequence, read N- to C-terminus: Pyridoxine/pyridoxamine 5'-phosphate oxidase (216 aa).

Residues 12-15 (RKSY) and lysine 70 each bind substrate. Residues 65-70 (RVVLVK), 80-81 (FT), arginine 86, and lysine 87 each bind FMN. Residues tyrosine 127, arginine 131, and serine 135 each contribute to the substrate site. FMN is bound by residues 144 to 145 (QS) and tryptophan 188. Residue 194 to 196 (RLH) participates in substrate binding. Position 198 (arginine 198) interacts with FMN.

Belongs to the pyridoxamine 5'-phosphate oxidase family. In terms of assembly, homodimer. The cofactor is FMN.

It catalyses the reaction pyridoxamine 5'-phosphate + O2 + H2O = pyridoxal 5'-phosphate + H2O2 + NH4(+). The catalysed reaction is pyridoxine 5'-phosphate + O2 = pyridoxal 5'-phosphate + H2O2. Its pathway is cofactor metabolism; pyridoxal 5'-phosphate salvage; pyridoxal 5'-phosphate from pyridoxamine 5'-phosphate: step 1/1. It functions in the pathway cofactor metabolism; pyridoxal 5'-phosphate salvage; pyridoxal 5'-phosphate from pyridoxine 5'-phosphate: step 1/1. Its function is as follows. Catalyzes the oxidation of either pyridoxine 5'-phosphate (PNP) or pyridoxamine 5'-phosphate (PMP) into pyridoxal 5'-phosphate (PLP). The polypeptide is Pyridoxine/pyridoxamine 5'-phosphate oxidase (Polaromonas sp. (strain JS666 / ATCC BAA-500)).